The primary structure comprises 423 residues: UDP-N-acetylglucosamine 1-carboxyvinyltransferase (423 aa).

Lys22–Asn23 provides a ligand contact to phosphoenolpyruvate. Arg98 provides a ligand contact to UDP-N-acetyl-alpha-D-glucosamine. The Proton donor role is filled by Cys122. Cys122 carries the post-translational modification 2-(S-cysteinyl)pyruvic acid O-phosphothioketal. UDP-N-acetyl-alpha-D-glucosamine-binding positions include Arg127–Gln131, Asp311, and Ile333.

This sequence belongs to the EPSP synthase family. MurA subfamily.

It is found in the cytoplasm. It catalyses the reaction phosphoenolpyruvate + UDP-N-acetyl-alpha-D-glucosamine = UDP-N-acetyl-3-O-(1-carboxyvinyl)-alpha-D-glucosamine + phosphate. The protein operates within cell wall biogenesis; peptidoglycan biosynthesis. In terms of biological role, cell wall formation. Adds enolpyruvyl to UDP-N-acetylglucosamine. The sequence is that of UDP-N-acetylglucosamine 1-carboxyvinyltransferase from Stenotrophomonas maltophilia (strain K279a).